The following is a 75-amino-acid chain: Endogenous retrovirus group K member 5 Np9 protein (75 aa).

Positions 22–43 (TAPKRQRPSRTGHDDDGGFVEK) are disordered. Residues 32-43 (TGHDDDGGFVEK) are compositionally biased toward basic and acidic residues.

The protein localises to the nucleus. Functionally, may possess a function in tumorigenesis. The protein is Endogenous retrovirus group K member 5 Np9 protein (ERVK-5) of Homo sapiens (Human).